A 182-amino-acid polypeptide reads, in one-letter code: R-phycoerythrin subunit beta (182 aa).

Cysteine 82 serves as a coordination point for (2R,3E)-phycoerythrobilin.

This sequence belongs to the phycobiliprotein family. As to quaternary structure, homodimer. Post-translationally, contains one covalently linked phycoerythrobilin chromophore.

Functionally, green-light absorbing phycoerythrin of unknown function. The protein is R-phycoerythrin subunit beta (cpeB) of Prochlorococcus marinus (strain SARG / CCMP1375 / SS120).